A 553-amino-acid chain; its full sequence is Putative transport protein YidE (553 aa).

5 consecutive transmembrane segments (helical) span residues 4–24 (IALTVSILALVAVVGLFIGNV), 28–48 (GIGLGIGGVLFGGIIVGHFVS), 65–85 (FGLILFVYTIGIQVGPGFFAS), 95–115 (LFAVLIVIIGGLVTAILHKLF), and 158–178 (MSYAMAYPFGICGILFTMWML). 2 RCK C-terminal domains span residues 191–276 (QQHE…VIGQ) and 279–361 (DTSL…VLGN). The next 6 membrane-spanning stretches (helical) occupy residues 371 to 391 (MLPVFIGIGLGVLLGSIPVFV), 393 to 413 (GFPAALKLGLAGGLLIMALIL), 431 to 448 (NLALRELGIVLFLSVVGL), 464 to 484 (LSWIGYGALITAVPLITVGIL), 493 to 513 (YLTMCGMLAGSMTDPPALAFA), and 533 to 553 (LVMFLRIITPQLLAVLFWSIG).

The protein belongs to the AAE transporter (TC 2.A.81) family. YidE subfamily.

It localises to the cell membrane. The sequence is that of Putative transport protein YidE from Shigella sonnei (strain Ss046).